Consider the following 464-residue polypeptide: DNA primase DnaG (464 aa).

The Toprim domain maps to 171–245 (DTIIIVEGRA…DIDYVARAPK (75 aa)). Mg(2+) contacts are provided by glutamate 177, aspartate 219, and aspartate 221.

This sequence belongs to the archaeal DnaG primase family. Forms a ternary complex with MCM helicase and DNA. It depends on Mg(2+) as a cofactor.

It carries out the reaction ssDNA + n NTP = ssDNA/pppN(pN)n-1 hybrid + (n-1) diphosphate.. Functionally, RNA polymerase that catalyzes the synthesis of short RNA molecules used as primers for DNA polymerase during DNA replication. In Methanococcus aeolicus (strain ATCC BAA-1280 / DSM 17508 / OCM 812 / Nankai-3), this protein is DNA primase DnaG.